A 1212-amino-acid chain; its full sequence is Histone demethylase UTY (1212 aa).

TPR repeat units follow at residues 88–121, 125–158, 165–193, 200–233, 245–278, 279–312, 313–346, and 347–380; these read SDFFCQLGHFNLLLEDYSKALSSYQRYYSLQTDY, AAFLYGLGLVYFYYNAFQWAIRAFQEVLYVDPNF, HLRLGFMFKMNTDYESSLKHFQLALIDCN, VEIQFHIAHLYETQRKYHSAKAAYEQLLQIESLP, GWMHHNMDLIGDNTTKERYAIQYLQKSLEEDPNS, GQSWYFLGRCYSCIGKVQDAFVSYRQSIDKSEAS, ADTWCSIGVLYQQQNQPMDALQAYICAVQLDHGH, and AAAWMDLGILYESCNQPQDAIKCYLNAARSKSCN. Positions 530–539 are enriched in basic and acidic residues; sequence FTKESKDSRS. Positions 530-555 are disordered; sequence FTKESKDSRSKSLTSKTSRKDRDTSN. At Thr-752 the chain carries Phosphothreonine. Residues 865–886 are disordered; the sequence is RRTQVKDYSDNESTCSDNSGRR. The region spanning 907–1070 is the JmjC domain; sequence KWKLQLHELT…YKLAVERYEW (164 aa). Fe cation is bound by residues His-958, Glu-960, and His-1038. Zn(2+) is bound by residues Cys-1143, Cys-1146, Cys-1170, and Cys-1173.

The protein belongs to the UTX family. In terms of assembly, binds TLE1 and TLE2. L-ascorbate is required as a cofactor. The cofactor is Fe(2+).

The protein resides in the nucleus. The enzyme catalyses N(6),N(6),N(6)-trimethyl-L-lysyl(27)-[histone H3] + 2 2-oxoglutarate + 2 O2 = N(6)-methyl-L-lysyl(27)-[histone H3] + 2 formaldehyde + 2 succinate + 2 CO2. In terms of biological role, male-specific histone demethylase that catalyzes trimethylated 'Lys-27' (H3K27me3) demethylation in histone H3. Has relatively low KDM activity. The chain is Histone demethylase UTY (Uty) from Mus musculus (Mouse).